We begin with the raw amino-acid sequence, 474 residues long: UDP-N-acetylmuramate--L-alanine ligase (474 aa).

Residue 122-128 (GTHGKTT) coordinates ATP.

The protein belongs to the MurCDEF family.

The protein localises to the cytoplasm. It carries out the reaction UDP-N-acetyl-alpha-D-muramate + L-alanine + ATP = UDP-N-acetyl-alpha-D-muramoyl-L-alanine + ADP + phosphate + H(+). The protein operates within cell wall biogenesis; peptidoglycan biosynthesis. In terms of biological role, cell wall formation. The sequence is that of UDP-N-acetylmuramate--L-alanine ligase from Saccharophagus degradans (strain 2-40 / ATCC 43961 / DSM 17024).